The sequence spans 324 residues: Tetrahydromethanopterin:alpha-L-glutamate ligase (324 aa).

The ATP-grasp domain occupies 113–321 (SYLLARAGLP…PAEYILEYLQ (209 aa)). ATP contacts are provided by residues K148, 195-204 (QEFIENPGRD), and R220. D265 contributes to the Mg(2+) binding site. Residue D265 participates in Mn(2+) binding. The segment at 274 to 293 (TGNENKKTEDKSTGQGSRIL) is disordered. Mg(2+)-binding residues include E294 and N296. Positions 294 and 296 each coordinate Mn(2+).

This sequence belongs to the RimK family. MptN subfamily. Homodimer. Mg(2+) is required as a cofactor. The cofactor is Mn(2+).

It carries out the reaction 5,6,7,8-tetrahydromethanopterin + L-glutamate + ATP = 5,6,7,8-tetrahydrosarcinapterin + ADP + phosphate + H(+). It participates in cofactor biosynthesis; 5,6,7,8-tetrahydrosarcinapterin biosynthesis. Catalyzes the ATP or GTP-dependent addition of one L-glutamate molecule to tetrahydromethanopterin, producing tetrahydrosarcinapterin. The polypeptide is Tetrahydromethanopterin:alpha-L-glutamate ligase (mptN) (Methanosarcina acetivorans (strain ATCC 35395 / DSM 2834 / JCM 12185 / C2A)).